The primary structure comprises 459 residues: Chromosomal replication initiator protein DnaA (459 aa).

Residues 1–73 (MEIPIESLWS…AHAVQDILGH (73 aa)) are domain I, interacts with DnaA modulators. The domain II stretch occupies residues 73–117 (HPVGIYITVAQGDEVSHFSEREVSWESTNPSSIPESLPHHNHKTT). Positions 118–334 (ELNSKYVFSR…GALIRAVAYI (217 aa)) are domain III, AAA+ region. ATP is bound by residues Gly162, Gly164, Lys165, and Thr166. A domain IV, binds dsDNA region spans residues 335-459 (SIWGLPMTVE…INMTSRSQKS (125 aa)).

This sequence belongs to the DnaA family. In terms of assembly, oligomerizes as a right-handed, spiral filament on DNA at oriC.

It localises to the cytoplasm. Functionally, plays an essential role in the initiation and regulation of chromosomal replication. ATP-DnaA binds to the origin of replication (oriC) to initiate formation of the DNA replication initiation complex once per cell cycle. Binds the DnaA box (a 9 base pair repeat at the origin) and separates the double-stranded (ds)DNA. Forms a right-handed helical filament on oriC DNA; dsDNA binds to the exterior of the filament while single-stranded (ss)DNA is stabiized in the filament's interior. The ATP-DnaA-oriC complex binds and stabilizes one strand of the AT-rich DNA unwinding element (DUE), permitting loading of DNA polymerase. After initiation quickly degrades to an ADP-DnaA complex that is not apt for DNA replication. Binds acidic phospholipids. The protein is Chromosomal replication initiator protein DnaA of Nostoc punctiforme (strain ATCC 29133 / PCC 73102).